The primary structure comprises 546 residues: Phenylalanine--tRNA ligase beta subunit (546 aa).

One can recognise a B5 domain in the interval 266-342; that stretch reads LAPAERVVSV…IAYGIENFDA (77 aa). Positions 320, 326, 329, and 330 each coordinate Mg(2+).

This sequence belongs to the phenylalanyl-tRNA synthetase beta subunit family. Type 2 subfamily. In terms of assembly, tetramer of two alpha and two beta subunits. Requires Mg(2+) as cofactor.

It is found in the cytoplasm. It catalyses the reaction tRNA(Phe) + L-phenylalanine + ATP = L-phenylalanyl-tRNA(Phe) + AMP + diphosphate + H(+). This chain is Phenylalanine--tRNA ligase beta subunit, found in Methanoculleus marisnigri (strain ATCC 35101 / DSM 1498 / JR1).